A 132-amino-acid polypeptide reads, in one-letter code: Small ribosomal subunit protein uS8 (132 aa).

This sequence belongs to the universal ribosomal protein uS8 family. Part of the 30S ribosomal subunit. Contacts proteins S5 and S12.

In terms of biological role, one of the primary rRNA binding proteins, it binds directly to 16S rRNA central domain where it helps coordinate assembly of the platform of the 30S subunit. The polypeptide is Small ribosomal subunit protein uS8 (Mycolicibacterium smegmatis (strain ATCC 700084 / mc(2)155) (Mycobacterium smegmatis)).